We begin with the raw amino-acid sequence, 118 residues long: Acetylcholine receptor subunit beta (118 aa).

A signal peptide spans 1–15 (APTVALLLLCALCSA).

This sequence belongs to the ligand-gated ion channel (TC 1.A.9) family. Acetylcholine receptor (TC 1.A.9.1) subfamily. Beta-1/CHRNB1 sub-subfamily. As to quaternary structure, pentamer of two alpha chains, and one each of the beta, delta, and gamma chains.

Its subcellular location is the postsynaptic cell membrane. It is found in the cell membrane. It carries out the reaction K(+)(in) = K(+)(out). The enzyme catalyses Na(+)(in) = Na(+)(out). In terms of biological role, after binding acetylcholine, the AChR responds by an extensive change in conformation that affects all subunits and leads to opening of an ion-conducting channel across the plasma membrane. The sequence is that of Acetylcholine receptor subunit beta (CHRNB1) from Gallus gallus (Chicken).